Consider the following 397-residue polypeptide: Exodeoxyribonuclease 7 large subunit (397 aa).

The protein belongs to the XseA family. As to quaternary structure, heterooligomer composed of large and small subunits.

Its subcellular location is the cytoplasm. The enzyme catalyses Exonucleolytic cleavage in either 5'- to 3'- or 3'- to 5'-direction to yield nucleoside 5'-phosphates.. In terms of biological role, bidirectionally degrades single-stranded DNA into large acid-insoluble oligonucleotides, which are then degraded further into small acid-soluble oligonucleotides. This chain is Exodeoxyribonuclease 7 large subunit, found in Anaplasma marginale (strain Florida).